A 175-amino-acid polypeptide reads, in one-letter code: Peptide methionine sulfoxide reductase MsrA (175 aa).

Cys10 is an active-site residue.

It belongs to the MsrA Met sulfoxide reductase family.

It carries out the reaction L-methionyl-[protein] + [thioredoxin]-disulfide + H2O = L-methionyl-(S)-S-oxide-[protein] + [thioredoxin]-dithiol. The enzyme catalyses [thioredoxin]-disulfide + L-methionine + H2O = L-methionine (S)-S-oxide + [thioredoxin]-dithiol. In terms of biological role, has an important function as a repair enzyme for proteins that have been inactivated by oxidation. Catalyzes the reversible oxidation-reduction of methionine sulfoxide in proteins to methionine. This is Peptide methionine sulfoxide reductase MsrA from Clavibacter michiganensis subsp. michiganensis (strain NCPPB 382).